Consider the following 577-residue polypeptide: Aspartate--tRNA(Asp/Asn) ligase (577 aa).

E171 lines the L-aspartate pocket. Positions 195 to 198 (QLFK) are aspartate. L-aspartate is bound at residue R217. Residues 217-219 (RDE) and Q226 each bind ATP. H444 provides a ligand contact to L-aspartate. E474 lines the ATP pocket. R481 is an L-aspartate binding site. Position 526 to 529 (526 to 529 (GFDR)) interacts with ATP.

It belongs to the class-II aminoacyl-tRNA synthetase family. Type 1 subfamily. Homodimer.

It is found in the cytoplasm. It carries out the reaction tRNA(Asx) + L-aspartate + ATP = L-aspartyl-tRNA(Asx) + AMP + diphosphate. Aspartyl-tRNA synthetase with relaxed tRNA specificity since it is able to aspartylate not only its cognate tRNA(Asp) but also tRNA(Asn). Is 1.7 times more efficient at aminoacylating tRNA(Asp) over tRNA(Asn). Reaction proceeds in two steps: L-aspartate is first activated by ATP to form Asp-AMP and then transferred to the acceptor end of tRNA(Asp/Asn). This chain is Aspartate--tRNA(Asp/Asn) ligase, found in Helicobacter pylori (strain ATCC 700392 / 26695) (Campylobacter pylori).